The primary structure comprises 196 residues: Small ribosomal subunit protein uS4c (196 aa).

Residues Leu15–Gln43 are disordered. Positions Met89–Asn150 constitute an S4 RNA-binding domain.

The protein belongs to the universal ribosomal protein uS4 family. Part of the 30S ribosomal subunit. Contacts protein S5. The interaction surface between S4 and S5 is involved in control of translational fidelity.

The protein resides in the plastid. It localises to the chloroplast. Its function is as follows. One of the primary rRNA binding proteins, it binds directly to 16S rRNA where it nucleates assembly of the body of the 30S subunit. In terms of biological role, with S5 and S12 plays an important role in translational accuracy. The chain is Small ribosomal subunit protein uS4c (rps4) from Bothriochloa ischaemum (Yellow bluestem).